A 161-amino-acid polypeptide reads, in one-letter code: Transcriptional repressor NrdR (161 aa).

A zinc finger spans residues C3–C34. Residues I49–D139 enclose the ATP-cone domain.

Belongs to the NrdR family. Zn(2+) serves as cofactor.

Its function is as follows. Negatively regulates transcription of bacterial ribonucleotide reductase nrd genes and operons by binding to NrdR-boxes. The protein is Transcriptional repressor NrdR of Synechococcus sp. (strain RCC307).